We begin with the raw amino-acid sequence, 237 residues long: Ly6/PLAUR domain-containing protein 8 (237 aa).

An N-terminal signal peptide occupies residues 1 to 19 (MKGILVAGITAVLVAAVES). N-linked (GlcNAc...) asparagine glycans are attached at residues Asn-45, Asn-73, Asn-107, Asn-118, Asn-132, Asn-172, Asn-175, and Asn-185. The UPAR/Ly6 domain maps to 125 to 176 (CPACYESNGTSCHGKPWKCYEEEQCVFLVAELKNDIESKSLVLKGCSNVSNA). Asn-215 carries GPI-anchor amidated asparagine lipidation. Positions 216–237 (VGSKASLYLLALASLLLRGLLP) are cleaved as a propeptide — removed in mature form.

The protein belongs to the CNF-like-inhibitor family. Highly N-glycosylated. Not O-glycosylated. Post-translationally, GPI-anchored. The GPI-anchor is cleaved, leading to secretion into the colonic lumen. Expressed in the large intestine. Preferentially expressed on the epithelial layer exposed to the lumen (at protein level).

It is found in the cell membrane. The protein localises to the secreted. In terms of biological role, secreted protein specifically required to prevent invasion of Gram-negative bacteria in the inner mucus layer of the colon epithelium, a portion of the large intestine which is free of commensal microbiota. Prevents invasion of flagellated microbiota by binding to the flagellum of bacteria, such as P.mirabilis, thereby inhibiting bacterial motility in the intestinal lumen. Segregation of intestinal bacteria and epithelial cells in the colon is required to preserve intestinal homeostasis. The protein is Ly6/PLAUR domain-containing protein 8 of Homo sapiens (Human).